A 320-amino-acid polypeptide reads, in one-letter code: Phospho-N-acetylmuramoyl-pentapeptide-transferase (320 aa).

The next 10 helical transmembrane spans lie at 7 to 27 (ILAI…VIPF), 50 to 70 (GTPT…SLIF), 77 to 97 (IGAP…DDFI), 113 to 133 (LVLQ…HLGS), 148 to 168 (WAYV…VNLT), 173 to 193 (GLAS…SIFS), 198 to 216 (MAIF…LRYN), 221 to 241 (VVFM…AIAV), 247 to 267 (VLVL…MLQV), and 297 to 317 (VVVV…AMIQ).

Belongs to the glycosyltransferase 4 family. MraY subfamily. Mg(2+) serves as cofactor.

It is found in the cell membrane. It carries out the reaction UDP-N-acetyl-alpha-D-muramoyl-L-alanyl-gamma-D-glutamyl-meso-2,6-diaminopimeloyl-D-alanyl-D-alanine + di-trans,octa-cis-undecaprenyl phosphate = di-trans,octa-cis-undecaprenyl diphospho-N-acetyl-alpha-D-muramoyl-L-alanyl-D-glutamyl-meso-2,6-diaminopimeloyl-D-alanyl-D-alanine + UMP. Its pathway is cell wall biogenesis; peptidoglycan biosynthesis. Functionally, catalyzes the initial step of the lipid cycle reactions in the biosynthesis of the cell wall peptidoglycan: transfers peptidoglycan precursor phospho-MurNAc-pentapeptide from UDP-MurNAc-pentapeptide onto the lipid carrier undecaprenyl phosphate, yielding undecaprenyl-pyrophosphoryl-MurNAc-pentapeptide, known as lipid I. In Caldicellulosiruptor bescii (strain ATCC BAA-1888 / DSM 6725 / KCTC 15123 / Z-1320) (Anaerocellum thermophilum), this protein is Phospho-N-acetylmuramoyl-pentapeptide-transferase.